The chain runs to 239 residues: Large ribosomal subunit protein uL2 (239 aa).

The segment at 200–239 (VNHPHGGKEHHIGRPSTVSRRAPPGRKVGHIAARRTGRRK) is disordered. Residues 222-239 (PPGRKVGHIAARRTGRRK) are compositionally biased toward basic residues.

The protein belongs to the universal ribosomal protein uL2 family. In terms of assembly, part of the 50S ribosomal subunit. Forms a bridge to the 30S subunit in the 70S ribosome.

In terms of biological role, one of the primary rRNA binding proteins. Required for association of the 30S and 50S subunits to form the 70S ribosome, for tRNA binding and peptide bond formation. It has been suggested to have peptidyltransferase activity; this is somewhat controversial. Makes several contacts with the 16S rRNA in the 70S ribosome. The chain is Large ribosomal subunit protein uL2 from Thermococcus onnurineus (strain NA1).